A 132-amino-acid chain; its full sequence is Small ribosomal subunit protein uS8 (132 aa).

Belongs to the universal ribosomal protein uS8 family. In terms of assembly, part of the 30S ribosomal subunit. Contacts proteins S5 and S12.

One of the primary rRNA binding proteins, it binds directly to 16S rRNA central domain where it helps coordinate assembly of the platform of the 30S subunit. In Bacillus subtilis (strain 168), this protein is Small ribosomal subunit protein uS8.